Here is a 647-residue protein sequence, read N- to C-terminus: MWRVCARRAQNAAPRAGFGARWTAFREEPGAPCVTPQAGSALARCSSKTPGYGRVRALCGWSPVSRATPRNRVLLQLWGSPSRRWYSLPPHQKVPLPSLSPTMQAGTIARWEKKEGEKINEGELIAEVETDKATVGFESVEECYMAKILVAEGTRDVPVGAIICITVDKPEDVEAFKNYTLDSSAAPAPPAAPAPTPAAPAPSPTPSAQAPGSSYPTHMQVLLPALSPTMTMGTVQRWEKKVGEKLNEGDLLAEIETDKATIGFEVQEEGYLAKILIPEGTRDVPLGTPLCIIVEKEADIPAFADYRPAEVTDLKPPAPPPIPSPAAPVPPAPQPVAPPPSAPRPAAPAGPKGRVFVSPLAKKLAAEKGIDLTQVKGTGPDGRIIKKDIDSFVPTKAAPTPAAAVPPPSPGVAPVPTGVFTDIPISNIRRVIAQRLMQSKQTIPHYYLSIDVNMGEVLLVRKELNKMLEGKSKISVNDFIIKASALACLKVPEANSSWMDTVIRQNHVVDISVAVSTPAGLITPIVFNAHIKGLETIANDVVSLATKAREGKLQPHEFQGGTFTISNLGMFGIKNFSAIINPPQACILAIGASEDRLVPADNEKGFDVASMMSVTLSCDHRVVDGAVGAQWLAEFRKYLEKPITMLL.

A mitochondrion-targeting transit peptide spans 1 to 86 (MWRVCARRAQ…LWGSPSRRWY (86 aa)). Residues 91 to 167 (HQKVPLPSLS…PVGAIICITV (77 aa)) enclose the Lipoyl-binding 1 domain. Ser-100 bears the Phosphoserine mark. N6-lipoyllysine is present on Lys-132. The tract at residues 184-216 (SAAPAPPAAPAPTPAAPAPSPTPSAQAPGSSYP) is disordered. Pro residues predominate over residues 187–205 (PAPPAAPAPTPAAPAPSPT). The Lipoyl-binding 2 domain maps to 218–294 (HMQVLLPALS…PLGTPLCIIV (77 aa)). Position 259 is an N6-lipoyllysine (Lys-259). The segment at 311–352 (VTDLKPPAPPPIPSPAAPVPPAPQPVAPPPSAPRPAAPAGPK) is disordered. Residues 316–348 (PPAPPPIPSPAAPVPPAPQPVAPPPSAPRPAAP) show a composition bias toward pro residues. One can recognise a Peripheral subunit-binding (PSBD) domain in the interval 356-393 (FVSPLAKKLAAEKGIDLTQVKGTGPDGRIIKKDIDSFV). Arg-461 serves as a coordination point for CoA. Lys-466 carries the N6-acetyllysine modification. Lys-473 is subject to N6-succinyllysine. Position 475 (Ser-475) interacts with CoA. Lys-547 is subject to N6-succinyllysine. Positions 566, 567, and 591 each coordinate CoA. Active-site residues include His-620 and Asp-624.

It belongs to the 2-oxoacid dehydrogenase family. As to quaternary structure, part of the pyruvate dehydrogenase complex (PDHc) that is a multi-enzyme complex composed of multiple copies of three enzymes, pyruvate dehydrogenase (subunits PDH1A and PDHB, E1 component), dihydrolipoamide acetyltransferase (DLAT, E2 component), and dihydrolipoamide dehydrogenase (DLD, E3 component) to which is added an additional protein the E3-binding protein (PDHX, E3BP). In terms of structural architecture, the E2 and E3BP components assemble into a 60meric central core with icosahedral symmetry. The central core is decorated with E1 and E3 proteins. Currently, two alternative models for the E2:E3BP stoichiometry are considered as being either 48:12 (E2(48)-E3BP(12)) or 40:20 (E2(40)-E3BP(20)). Interacts with PDK2 and PDK3. Interacts with SIRT4. Interacts with PDHB. (R)-lipoate is required as a cofactor. In terms of processing, delipoylated at Lys-132 and Lys-259 by SIRT4, delipoylation decreases the PHD complex activity.

The protein resides in the mitochondrion matrix. It carries out the reaction N(6)-[(R)-dihydrolipoyl]-L-lysyl-[protein] + acetyl-CoA = N(6)-[(R)-S(8)-acetyldihydrolipoyl]-L-lysyl-[protein] + CoA. As part of the pyruvate dehydrogenase complex, catalyzes the transfers of an acetyl group to a lipoic acid moiety. The pyruvate dehydrogenase complex, catalyzes the overall conversion of pyruvate to acetyl-CoA and CO(2), and thereby links cytoplasmic glycolysis and the mitochondrial tricarboxylic acid (TCA) cycle. This chain is Dihydrolipoyllysine-residue acetyltransferase component of pyruvate dehydrogenase complex, found in Bos taurus (Bovine).